A 765-amino-acid chain; its full sequence is ATP-dependent zinc metalloprotease FtsH (765 aa).

Residues 1 to 27 are Cytoplasmic-facing; sequence MSNTSNFNERVTENAKPPKNVKSIIWK. Residues 28-48 traverse the membrane as a helical segment; sequence TIGIIIVMAIIIGLILFYVLP. Topologically, residues 49–213 are extracellular; sequence RNTIANISNI…NVQLPNQSTA (165 aa). The chain crosses the membrane as a helical span at residues 214–234; it reads ILTQFLTSIIPFVILIVIYIV. Residues 235-765 are Cytoplasmic-facing; it reads IARRFSRTMG…EPTASTASSN (531 aa). 314-321 serves as a coordination point for ATP; sequence GPPGTGKT. His-536 is a binding site for Zn(2+). Residue Glu-537 is part of the active site. His-540 and Asp-615 together coordinate Zn(2+). The span at 730–748 shows a compositional bias: basic and acidic residues; the sequence is KAAAEKEEQAEKAKLDHQS. Residues 730 to 765 are disordered; sequence KAAAEKEEQAEKAKLDHQSDSAQPQEEPTASTASSN. Residues 749–765 show a composition bias toward polar residues; the sequence is DSAQPQEEPTASTASSN.

In the central section; belongs to the AAA ATPase family. The protein in the C-terminal section; belongs to the peptidase M41 family. In terms of assembly, homohexamer. Zn(2+) serves as cofactor.

The protein localises to the cell membrane. Its function is as follows. Acts as a processive, ATP-dependent zinc metallopeptidase for both cytoplasmic and membrane proteins. Plays a role in the quality control of integral membrane proteins. The polypeptide is ATP-dependent zinc metalloprotease FtsH (Mycoplasmoides gallisepticum (strain R(high / passage 156)) (Mycoplasma gallisepticum)).